The sequence spans 644 residues: 1-deoxy-D-xylulose-5-phosphate synthase (644 aa).

Residues H72 and 113-115 (GHA) each bind thiamine diphosphate. D144 is a Mg(2+) binding site. Thiamine diphosphate-binding positions include 145–146 (GA), N174, Y287, and E370. Mg(2+) is bound at residue N174.

It belongs to the transketolase family. DXPS subfamily. As to quaternary structure, homodimer. Mg(2+) is required as a cofactor. Requires thiamine diphosphate as cofactor.

The enzyme catalyses D-glyceraldehyde 3-phosphate + pyruvate + H(+) = 1-deoxy-D-xylulose 5-phosphate + CO2. It functions in the pathway metabolic intermediate biosynthesis; 1-deoxy-D-xylulose 5-phosphate biosynthesis; 1-deoxy-D-xylulose 5-phosphate from D-glyceraldehyde 3-phosphate and pyruvate: step 1/1. In terms of biological role, catalyzes the acyloin condensation reaction between C atoms 2 and 3 of pyruvate and glyceraldehyde 3-phosphate to yield 1-deoxy-D-xylulose-5-phosphate (DXP). The chain is 1-deoxy-D-xylulose-5-phosphate synthase from Prochlorococcus marinus (strain MIT 9313).